An 883-amino-acid polypeptide reads, in one-letter code: Valine--tRNA ligase (883 aa).

The short motif at 52-62 (PNVTGRLHLGH) is the 'HIGH' region element. The short motif at 529–533 (KMSKS) is the 'KMSKS' region element. ATP is bound at residue Lys-532. The stretch at 813-848 (LEGLIDFDKEIKRLENELAKWTKEVERVQKKLSNQG) forms a coiled coil.

The protein belongs to the class-I aminoacyl-tRNA synthetase family. ValS type 1 subfamily. Monomer.

Its subcellular location is the cytoplasm. The catalysed reaction is tRNA(Val) + L-valine + ATP = L-valyl-tRNA(Val) + AMP + diphosphate. Functionally, catalyzes the attachment of valine to tRNA(Val). As ValRS can inadvertently accommodate and process structurally similar amino acids such as threonine, to avoid such errors, it has a 'posttransfer' editing activity that hydrolyzes mischarged Thr-tRNA(Val) in a tRNA-dependent manner. The sequence is that of Valine--tRNA ligase from Oceanobacillus iheyensis (strain DSM 14371 / CIP 107618 / JCM 11309 / KCTC 3954 / HTE831).